The following is a 579-amino-acid chain: Membrane frizzled-related protein (579 aa).

Residues 1-69 (MKDFSDVILC…RPDCRFSWLC (69 aa)) are Cytoplasmic-facing. Residues 70–90 (VLLLSSLLLLLLGLLVAIILA) form a helical; Signal-anchor for type II membrane protein membrane-spanning segment. The Extracellular segment spans residues 91–579 (QLQAAPPSGA…AADLEACAQP (489 aa)). The interval 100–143 (ASHSPLPAGGLTTTTTTPTITTSQAAGTPKGQQESGVSPSPQST) is disordered. The span at 111 to 121 (TTTTTTPTITT) shows a compositional bias: low complexity. Residues 122 to 143 (SQAAGTPKGQQESGVSPSPQST) show a composition bias toward polar residues. Cystine bridges form between Cys-144–Cys-170 and Cys-197–Cys-216. Residues 144 to 253 (CGGLLSGPRG…FGFHAWYQAM (110 aa)) enclose the CUB 1 domain. An N-linked (GlcNAc...) asparagine glycan is attached at Asn-227. In terms of domain architecture, LDL-receptor class A 1 spans 259–295 (SCAHDEFRCDQLICLLPDSVCDGFANCADGSDETNCS). 5 cysteine pairs are disulfide-bonded: Cys-260-Cys-272, Cys-267-Cys-285, Cys-279-Cys-294, Cys-301-Cys-327, and Cys-354-Cys-377. The 114-residue stretch at 301–414 (CGGNLTGLQG…GGFSATYLAF (114 aa)) folds into the CUB 2 domain. Asn-415 carries an N-linked (GlcNAc...) asparagine glycan. The 36-residue stretch at 420–455 (PCGPSELSCQAGGCKGVQWMCDMWRDCTDGSDDNCS) folds into the LDL-receptor class A 2 domain. 8 disulfides stabilise this stretch: Cys-421/Cys-433, Cys-428/Cys-446, Cys-440/Cys-454, Cys-466/Cys-528, Cys-474/Cys-521, Cys-512/Cys-549, Cys-538/Cys-576, and Cys-542/Cys-564. The FZ domain maps to 461–579 (PPELACEPVQ…AADLEACAQP (119 aa)).

As to quaternary structure, interacts with C1QTNF5. In terms of tissue distribution, specifically expressed in brain. Strongly expressed in medulla oblongata and to a lower extent in hippocampus and corpus callosum. Expressed in keratinocytes.

It localises to the apical cell membrane. In terms of biological role, may play a role in eye development. The protein is Membrane frizzled-related protein (MFRP) of Homo sapiens (Human).